The primary structure comprises 557 residues: MARSKIVKHIFVTGGVVSSLGKGILSASLGALLKSRGLRVAIQKYDPYINVDPGTMSPYQHGEVYVTDDGAETDLDLGHYERFLDEATSRASNMTMGRIYKTVLDNERRGDYLGGTVQVVPHVIDEIKARMLDLAKKGSFDVVITEIGGTVGDIESLPFLEAMRQLKLQLGSKNLVNIHLTLVPYIKSAAELKTKPTQHSVKMLLEIGIQPDILVCRSEHPLSKDIKHKIGLFCNLSDSDVVGLCDAETIYEVPLVLHEEKIDSLVLKKLMLKSPKPADIKDWKDFSGKVKFPKDGVVEIGVCGKYTKYPDAYKSIVESFIHAGAANNVKVKVRWMHSEDLEQKDCKVNEMLQGISGILVAPGFGERGIEGKIEIVKIARERNIPFFGICLGMQCATIEYARNVCGMEGAHSTEFVKKTKYPVIDLMEHQRSVKQKGGTMRLGSYPCILEENTNAFAAYGKNLINERHRHRYEFNNQFKEELSAKGLVIAGASPDGELVEIIELKGHRWFVGVQFHPELKSRVHKPHPLFISFVAEAKKFRDEMAVHHYETSSVETV.

An amidoligase domain region spans residues 1 to 272 (MARSKIVKHI…DSLVLKKLML (272 aa)). Ser18 contacts CTP. Position 18 (Ser18) interacts with UTP. Position 19-24 (19-24 (SLGKGI)) interacts with ATP. L-glutamine is bound at residue Tyr59. Asp76 is a binding site for ATP. Mg(2+) contacts are provided by Asp76 and Glu146. Residues 153 to 155 (DIE), 193 to 198 (KTKPTQ), and Lys229 contribute to the CTP site. UTP contacts are provided by residues 193-198 (KTKPTQ) and Lys229. The Glutamine amidotransferase type-1 domain maps to 299–543 (EIGVCGKYTK…VAEAKKFRDE (245 aa)). Gly363 provides a ligand contact to L-glutamine. Cys390 serves as the catalytic Nucleophile; for glutamine hydrolysis. Residues 391 to 394 (LGMQ), Glu414, and Arg471 each bind L-glutamine. Catalysis depends on residues His516 and Glu518.

Belongs to the CTP synthase family. In terms of assembly, homotetramer.

The enzyme catalyses UTP + L-glutamine + ATP + H2O = CTP + L-glutamate + ADP + phosphate + 2 H(+). It carries out the reaction L-glutamine + H2O = L-glutamate + NH4(+). It catalyses the reaction UTP + NH4(+) + ATP = CTP + ADP + phosphate + 2 H(+). The protein operates within pyrimidine metabolism; CTP biosynthesis via de novo pathway; CTP from UDP: step 2/2. Allosterically activated by GTP, when glutamine is the substrate; GTP has no effect on the reaction when ammonia is the substrate. The allosteric effector GTP functions by stabilizing the protein conformation that binds the tetrahedral intermediate(s) formed during glutamine hydrolysis. Inhibited by the product CTP, via allosteric rather than competitive inhibition. Catalyzes the ATP-dependent amination of UTP to CTP with either L-glutamine or ammonia as the source of nitrogen. Regulates intracellular CTP levels through interactions with the four ribonucleotide triphosphates. This chain is CTP synthase, found in Chloroherpeton thalassium (strain ATCC 35110 / GB-78).